The following is a 178-amino-acid chain: Negative modulator of initiation of replication (178 aa).

The interval 113-117 (RTRVY) is interaction with DNA.

The protein belongs to the SeqA family. Homodimer. Polymerizes to form helical filaments.

The protein localises to the cytoplasm. Negative regulator of replication initiation, which contributes to regulation of DNA replication and ensures that replication initiation occurs exactly once per chromosome per cell cycle. Binds to pairs of hemimethylated GATC sequences in the oriC region, thus preventing assembly of replication proteins and re-initiation at newly replicated origins. Repression is relieved when the region becomes fully methylated. This Photobacterium profundum (strain SS9) protein is Negative modulator of initiation of replication.